We begin with the raw amino-acid sequence, 209 residues long: Probable transcriptional regulator ycf29 (209 aa).

The 117-residue stretch at 4-120 (NLMLVENDTV…ELVSLIKNLI (117 aa)) folds into the Response regulatory domain. Position 53 is a 4-aspartylphosphate (aspartate 53). The region spanning 139–204 (PLFQLLYLTP…LLVKYSIKNN (66 aa)) is the HTH luxR-type domain.

The protein resides in the plastid. Its subcellular location is the chloroplast. This is Probable transcriptional regulator ycf29 (ycf29) from Porphyra purpurea (Red seaweed).